Reading from the N-terminus, the 311-residue chain is MVNPLYQKHIISINDLSREDLELTLRVAASLKAKPQPELLKHKVIASCFFEASTRTRLSFETAMHRLGASVVGFADSNNTSLGKKGETLADTISVISQYVDAIVMRHPQEGASRLATEFSGGIPVLNAGDGANQHPTQTLLDLFTIQETQGRLNNINIAMVGDLKYGRTVHSLTQALAKFEGNRFYFIAPDALAMPDYILSMLKEKNIAYSLHNSIDEVVGELDILYMTRVQKERLDPSEYINIKSQFVLRAADLHSARPNLKVLHPLPRVDEITIDVDATPYAYYFQQAGNGIYARQALLALVLNRELVL.

Arg-55 and Thr-56 together coordinate carbamoyl phosphate. Lys-85 is an L-aspartate binding site. Arg-106, His-135, and Gln-138 together coordinate carbamoyl phosphate. 2 residues coordinate L-aspartate: Arg-168 and Arg-230. Carbamoyl phosphate is bound by residues Leu-268 and Pro-269.

Belongs to the aspartate/ornithine carbamoyltransferase superfamily. ATCase family. In terms of assembly, heterododecamer (2C3:3R2) of six catalytic PyrB chains organized as two trimers (C3), and six regulatory PyrI chains organized as three dimers (R2).

It catalyses the reaction carbamoyl phosphate + L-aspartate = N-carbamoyl-L-aspartate + phosphate + H(+). The protein operates within pyrimidine metabolism; UMP biosynthesis via de novo pathway; (S)-dihydroorotate from bicarbonate: step 2/3. Functionally, catalyzes the condensation of carbamoyl phosphate and aspartate to form carbamoyl aspartate and inorganic phosphate, the committed step in the de novo pyrimidine nucleotide biosynthesis pathway. This is Aspartate carbamoyltransferase catalytic subunit from Pectobacterium carotovorum subsp. carotovorum (strain PC1).